Reading from the N-terminus, the 262-residue chain is ATP synthase subunit a (262 aa).

5 consecutive transmembrane segments (helical) span residues 25–45 (NVHIDTLFFSVLAAIIFLAVF), 86–106 (VAPLALTIFCWVFIMNAIDLI), 130–150 (DISATLGMSLCVFALILFYTV), 204–226 (LIFILIAVMYSANAAIAALGIPL), and 240–260 (LQAFIFMMLTVVYLSIAYNKA).

Belongs to the ATPase A chain family. As to quaternary structure, F-type ATPases have 2 components, CF(1) - the catalytic core - and CF(0) - the membrane proton channel. CF(1) has five subunits: alpha(3), beta(3), gamma(1), delta(1), epsilon(1). CF(0) has three main subunits: a(1), b(2) and c(9-12). The alpha and beta chains form an alternating ring which encloses part of the gamma chain. CF(1) is attached to CF(0) by a central stalk formed by the gamma and epsilon chains, while a peripheral stalk is formed by the delta and b chains.

The protein localises to the cell inner membrane. Key component of the proton channel; it plays a direct role in the translocation of protons across the membrane. The chain is ATP synthase subunit a from Mannheimia succiniciproducens (strain KCTC 0769BP / MBEL55E).